The sequence spans 23 residues: Septenin 2b (23 aa).

As to expression, expressed in skin glands.

The protein resides in the secreted. May act as an antimicrobial peptide. This is Septenin 2b from Osteopilus septentrionalis (Cuban treefrog).